Here is a 43-residue protein sequence, read N- to C-terminus: Protein PsbN (43 aa).

The helical transmembrane segment at 7-24 (VAISISRSLVSFTGYALY) threads the bilayer.

The protein belongs to the PsbN family.

It is found in the plastid. The protein resides in the chloroplast thylakoid membrane. Its function is as follows. May play a role in photosystem I and II biogenesis. This Ginkgo biloba (Ginkgo) protein is Protein PsbN.